We begin with the raw amino-acid sequence, 175 residues long: NADH-quinone oxidoreductase subunit I (175 aa).

2 consecutive 4Fe-4S ferredoxin-type domains span residues 64-93 (KRDE…IIAD) and 110-139 (SLYE…LTEE). [4Fe-4S] cluster-binding residues include cysteine 73, cysteine 76, cysteine 79, cysteine 83, cysteine 119, cysteine 122, cysteine 125, and cysteine 129.

This sequence belongs to the complex I 23 kDa subunit family. As to quaternary structure, NDH-1 is composed of 14 different subunits. Subunits NuoA, H, J, K, L, M, N constitute the membrane sector of the complex. [4Fe-4S] cluster serves as cofactor.

It localises to the cell inner membrane. It catalyses the reaction a quinone + NADH + 5 H(+)(in) = a quinol + NAD(+) + 4 H(+)(out). NDH-1 shuttles electrons from NADH, via FMN and iron-sulfur (Fe-S) centers, to quinones in the respiratory chain. The immediate electron acceptor for the enzyme in this species is believed to be ubiquinone. Couples the redox reaction to proton translocation (for every two electrons transferred, four hydrogen ions are translocated across the cytoplasmic membrane), and thus conserves the redox energy in a proton gradient. This Cytophaga hutchinsonii (strain ATCC 33406 / DSM 1761 / CIP 103989 / NBRC 15051 / NCIMB 9469 / D465) protein is NADH-quinone oxidoreductase subunit I.